Here is a 465-residue protein sequence, read N- to C-terminus: Na(+)-translocating NADH-quinone reductase subunit A (465 aa).

It belongs to the NqrA family. Composed of six subunits; NqrA, NqrB, NqrC, NqrD, NqrE and NqrF.

The enzyme catalyses a ubiquinone + n Na(+)(in) + NADH + H(+) = a ubiquinol + n Na(+)(out) + NAD(+). In terms of biological role, NQR complex catalyzes the reduction of ubiquinone-1 to ubiquinol by two successive reactions, coupled with the transport of Na(+) ions from the cytoplasm to the periplasm. NqrA to NqrE are probably involved in the second step, the conversion of ubisemiquinone to ubiquinol. The protein is Na(+)-translocating NADH-quinone reductase subunit A of Chlamydia trachomatis serovar L2b (strain UCH-1/proctitis).